A 54-amino-acid chain; its full sequence is Ovomucoid (54 aa).

The region spanning 4-54 (VDCSDYPKPVCTLEDMPLCGSDNITYHNKCYFCNAVAHSNGTLTFSHFGKC) is the Kazal-like domain. Disulfide bonds link C6-C36, C14-C33, and C22-C54. N43 carries an N-linked (GlcNAc...) asparagine glycan.

The protein localises to the secreted. This Carpococcyx renauldi (Coral-billed ground-cuckoo) protein is Ovomucoid.